The sequence spans 350 residues: 3-dehydroquinate synthase (350 aa).

NAD(+) is bound by residues 63–68, 97–101, 121–122, K134, K143, and 161–164; these read DGEEYK, GVIGD, TT, and FLKT. Positions 176, 235, and 252 each coordinate Zn(2+).

This sequence belongs to the sugar phosphate cyclases superfamily. Dehydroquinate synthase family. The cofactor is Co(2+). Requires Zn(2+) as cofactor. It depends on NAD(+) as a cofactor.

Its subcellular location is the cytoplasm. It carries out the reaction 7-phospho-2-dehydro-3-deoxy-D-arabino-heptonate = 3-dehydroquinate + phosphate. It functions in the pathway metabolic intermediate biosynthesis; chorismate biosynthesis; chorismate from D-erythrose 4-phosphate and phosphoenolpyruvate: step 2/7. Catalyzes the conversion of 3-deoxy-D-arabino-heptulosonate 7-phosphate (DAHP) to dehydroquinate (DHQ). This is 3-dehydroquinate synthase from Sulfurovum sp. (strain NBC37-1).